Here is a 327-residue protein sequence, read N- to C-terminus: Tetraacyldisaccharide 4'-kinase (327 aa).

An ATP-binding site is contributed by 52–59; it reads TAGGAGKT.

Belongs to the LpxK family.

The enzyme catalyses a lipid A disaccharide + ATP = a lipid IVA + ADP + H(+). It functions in the pathway glycolipid biosynthesis; lipid IV(A) biosynthesis; lipid IV(A) from (3R)-3-hydroxytetradecanoyl-[acyl-carrier-protein] and UDP-N-acetyl-alpha-D-glucosamine: step 6/6. Transfers the gamma-phosphate of ATP to the 4'-position of a tetraacyldisaccharide 1-phosphate intermediate (termed DS-1-P) to form tetraacyldisaccharide 1,4'-bis-phosphate (lipid IVA). This chain is Tetraacyldisaccharide 4'-kinase, found in Gluconacetobacter diazotrophicus (strain ATCC 49037 / DSM 5601 / CCUG 37298 / CIP 103539 / LMG 7603 / PAl5).